A 412-amino-acid polypeptide reads, in one-letter code: NADH-quinone oxidoreductase subunit D (412 aa).

The protein belongs to the complex I 49 kDa subunit family. In terms of assembly, NDH-1 is composed of at least 14 different subunits, Nqo1 to Nqo14. The complex has a L-shaped structure, with the hydrophobic arm (subunits Nqo7, Nqo8, Nqo10 to Nqo14) embedded in the inner membrane and the hydrophilic peripheral arm (subunits Nqo1 to Nqo6, Nqo9) protruding into the bacterial cytoplasm. The hydrophilic domain contains all the redox centers. NADH-quinone oxidoreductase forms a supercomplex with ubiquinol-cytochrome c reductase complex (complex III or cytochrome b-c1 complex) and cytochrome c oxidase (complex IV), which stabilizes the NADH-quinone oxidoreductase complex.

The protein resides in the cell inner membrane. The enzyme catalyses a quinone + NADH + 5 H(+)(in) = a quinol + NAD(+) + 4 H(+)(out). In terms of biological role, NDH-1 shuttles electrons from NADH, via FMN and iron-sulfur (Fe-S) centers, to quinones in the respiratory chain. The immediate electron acceptor for the enzyme in this species is believed to be ubiquinone. Couples the redox reaction to proton translocation (for every two electrons transferred, four hydrogen ions are translocated across the cytoplasmic membrane), and thus conserves the redox energy in a proton gradient. This is NADH-quinone oxidoreductase subunit D (nuoD) from Paracoccus denitrificans (strain Pd 1222).